Here is a 65-residue protein sequence, read N- to C-terminus: Muscarinic toxin 3 (65 aa).

Disulfide bonds link cysteine 3-cysteine 24, cysteine 17-cysteine 42, cysteine 46-cysteine 57, and cysteine 58-cysteine 63.

This sequence belongs to the three-finger toxin family. Short-chain subfamily. Aminergic toxin sub-subfamily. Expressed by the venom gland.

Its subcellular location is the secreted. Its function is as follows. Potent antagonist (IC(50)=1-10 nM) of M4 (CHRM4) muscarinic receptors, and CHRM1, ADRA1A, ADRA2A and ADRA2C adrenergic receptors. Also antagonises ADRA1B and ADRA1D adrenergic receptors with a 10-times lower affinity. This chain is Muscarinic toxin 3, found in Dendroaspis angusticeps (Eastern green mamba).